We begin with the raw amino-acid sequence, 424 residues long: Adenylosuccinate synthetase (424 aa).

GTP-binding positions include 12 to 18 and 40 to 42; these read GDEGKGK and GHT. The active-site Proton acceptor is the Asp13. 2 residues coordinate Mg(2+): Asp13 and Gly40. IMP is bound by residues 13–16, 38–41, Thr130, Arg144, Asn220, Thr235, and Arg299; these read DEGK and NAGH. The active-site Proton donor is the His41. 295–301 contacts substrate; it reads VTTGRRR. GTP contacts are provided by residues Arg301, 327–329, and 412–414; these read KLD and GTG.

This sequence belongs to the adenylosuccinate synthetase family. Homodimer. Mg(2+) serves as cofactor.

Its subcellular location is the cytoplasm. The enzyme catalyses IMP + L-aspartate + GTP = N(6)-(1,2-dicarboxyethyl)-AMP + GDP + phosphate + 2 H(+). Its pathway is purine metabolism; AMP biosynthesis via de novo pathway; AMP from IMP: step 1/2. Functionally, plays an important role in the de novo pathway and in the salvage pathway of purine nucleotide biosynthesis. Catalyzes the first committed step in the biosynthesis of AMP from IMP. The sequence is that of Adenylosuccinate synthetase from Aspergillus flavus (strain ATCC 200026 / FGSC A1120 / IAM 13836 / NRRL 3357 / JCM 12722 / SRRC 167).